A 431-amino-acid polypeptide reads, in one-letter code: Ribosomal RNA small subunit methyltransferase B (431 aa).

Residues 254-260 (CAAPGGK), Asp277, Asp303, and Asp322 each bind S-adenosyl-L-methionine. Cys375 (nucleophile) is an active-site residue. Residues 398–417 (LHATGTPASPGQQNLPGPEE) form a disordered region. Over residues 403–412 (TPASPGQQNL) the composition is skewed to polar residues.

It belongs to the class I-like SAM-binding methyltransferase superfamily. RsmB/NOP family.

Its subcellular location is the cytoplasm. It catalyses the reaction cytidine(967) in 16S rRNA + S-adenosyl-L-methionine = 5-methylcytidine(967) in 16S rRNA + S-adenosyl-L-homocysteine + H(+). Functionally, specifically methylates the cytosine at position 967 (m5C967) of 16S rRNA. This chain is Ribosomal RNA small subunit methyltransferase B, found in Klebsiella pneumoniae (strain 342).